We begin with the raw amino-acid sequence, 219 residues long: Cell division protein B2 (219 aa).

Part of a cell division machinery. The sequence is that of Cell division protein B2 from Sulfolobus acidocaldarius (strain ATCC 33909 / DSM 639 / JCM 8929 / NBRC 15157 / NCIMB 11770).